A 104-amino-acid chain; its full sequence is Large ribosomal subunit protein uL24 (104 aa).

The protein belongs to the universal ribosomal protein uL24 family. As to quaternary structure, part of the 50S ribosomal subunit.

In terms of biological role, one of two assembly initiator proteins, it binds directly to the 5'-end of the 23S rRNA, where it nucleates assembly of the 50S subunit. One of the proteins that surrounds the polypeptide exit tunnel on the outside of the subunit. The chain is Large ribosomal subunit protein uL24 from Rhodopseudomonas palustris (strain BisB18).